Reading from the N-terminus, the 325-residue chain is Glutaminase (325 aa).

Residues serine 76, asparagine 125, glutamate 169, asparagine 176, tyrosine 200, tyrosine 252, and valine 270 each contribute to the substrate site.

Belongs to the glutaminase family. In terms of assembly, homotetramer.

The catalysed reaction is L-glutamine + H2O = L-glutamate + NH4(+). The polypeptide is Glutaminase (Clavibacter michiganensis subsp. michiganensis (strain NCPPB 382)).